The chain runs to 206 residues: Large ribosomal subunit protein uL4 (206 aa).

Residues 45 to 76 are disordered; it reads RQGNQSAKTRAEVSGGGKKPWRQKGTGRARQG.

This sequence belongs to the universal ribosomal protein uL4 family. Part of the 50S ribosomal subunit.

One of the primary rRNA binding proteins, this protein initially binds near the 5'-end of the 23S rRNA. It is important during the early stages of 50S assembly. It makes multiple contacts with different domains of the 23S rRNA in the assembled 50S subunit and ribosome. Functionally, forms part of the polypeptide exit tunnel. The protein is Large ribosomal subunit protein uL4 of Clostridium novyi (strain NT).